Consider the following 673-residue polypeptide: MVELIKVPKIEQEEGNADSHGKEKADVVHEEKTEKVKRRRKRVSDPQRKKACVDCTKRCIRIHGMASSSSEKARPTPTLPSFFKIMVGYFSENMDIPLPFARTITDMTGSNVYLEDAYGLRWRVRLYLHDDVLSFGHGWKNFVLDHDISVGEFLVFRQIARSVFTVQIFAISACERIHLCERNKRQSRKRKPGRKTGYPANNQMVKVSSKDVVKRRKKQRTDEQIYDLDPRQHDMPVRVCIDSGSEQRCSESSVKELDAAPDKSHAVVQVPATECNADPSYNAAGMKTIKNLEAIGASSSTKDVTWDANKSEDYPSFSYPESSNVMTADKESERSHQDRPMQLYCELGLEDGNAETENCENSNVLENAELRTPLAMMDLNEVGIDDIFLSADIYEFDSDFCSPEAFSVDVNTEGLVSNGRTPGDCFGVPETSRCLENKQMTDVPRTSTDDGSIAVHGIDINALPSNTYPDIGQGNTYPDIDAAPDDCKKDKDVLHSECNKVAQKAHSSVKQDITKDGPRQIAAEIMSSDPKTCELTYVRKNSVQPGISSVSQWNNSKGQESGGTKSCVVLAVAANSKKFCITIPPPDQTWLELPRRLPVLPRTKKQARKILILKDPSMRLWPVLYQCTPKFNGFIAGWADISRENNLREGDTCEFELCSNSELSFQVLVPNLQ.

Basic and acidic residues predominate over residues 1–34 (MVELIKVPKIEQEEGNADSHGKEKADVVHEEKTE). The tract at residues 1–44 (MVELIKVPKIEQEEGNADSHGKEKADVVHEEKTEKVKRRRKRVS) is disordered. A DNA-binding region (TF-B3 1) is located at residues 79-172 (LPSFFKIMVG…VFTVQIFAIS (94 aa)). Positions 315–337 (PSFSYPESSNVMTADKESERSHQ) are disordered. Over residues 328–337 (ADKESERSHQ) the composition is skewed to basic and acidic residues. Residues 576–671 (SKKFCITIPP…ELSFQVLVPN (96 aa)) constitute a DNA-binding region (TF-B3 2).

The protein localises to the nucleus. This Oryza sativa subsp. japonica (Rice) protein is B3 domain-containing protein Os01g0905400.